The chain runs to 285 residues: Probable endonuclease 4 (285 aa).

Zn(2+) contacts are provided by His67, His107, Glu144, Asp177, His180, His214, Asp227, His229, and Glu259.

It belongs to the AP endonuclease 2 family. It depends on Zn(2+) as a cofactor.

It carries out the reaction Endonucleolytic cleavage to 5'-phosphooligonucleotide end-products.. Functionally, endonuclease IV plays a role in DNA repair. It cleaves phosphodiester bonds at apurinic or apyrimidinic (AP) sites, generating a 3'-hydroxyl group and a 5'-terminal sugar phosphate. The protein is Probable endonuclease 4 of Persephonella marina (strain DSM 14350 / EX-H1).